The chain runs to 215 residues: Ribose-5-phosphate isomerase A (215 aa).

Residues 26 to 29, 79 to 82, and 92 to 95 each bind substrate; these read TGST, DGAD, and KGGG. Catalysis depends on E101, which acts as the Proton acceptor. K119 contributes to the substrate binding site.

This sequence belongs to the ribose 5-phosphate isomerase family. Homodimer.

The catalysed reaction is aldehydo-D-ribose 5-phosphate = D-ribulose 5-phosphate. The protein operates within carbohydrate degradation; pentose phosphate pathway; D-ribose 5-phosphate from D-ribulose 5-phosphate (non-oxidative stage): step 1/1. Functionally, catalyzes the reversible conversion of ribose-5-phosphate to ribulose 5-phosphate. In Xylella fastidiosa (strain M12), this protein is Ribose-5-phosphate isomerase A.